A 678-amino-acid polypeptide reads, in one-letter code: Glycine--tRNA ligase beta subunit (678 aa).

The protein belongs to the class-II aminoacyl-tRNA synthetase family. Tetramer of two alpha and two beta subunits.

It is found in the cytoplasm. It carries out the reaction tRNA(Gly) + glycine + ATP = glycyl-tRNA(Gly) + AMP + diphosphate. The sequence is that of Glycine--tRNA ligase beta subunit from Streptococcus pneumoniae (strain Hungary19A-6).